Here is a 37-residue protein sequence, read N- to C-terminus: Large ribosomal subunit protein bL36 (37 aa).

The protein belongs to the bacterial ribosomal protein bL36 family.

The chain is Large ribosomal subunit protein bL36 from Streptomyces griseus subsp. griseus (strain JCM 4626 / CBS 651.72 / NBRC 13350 / KCC S-0626 / ISP 5235).